Reading from the N-terminus, the 301-residue chain is Nucleosome assembly protein 1;3 (301 aa).

Positions 15-69 (VETLKNKLQALAEQHVDVLESLAPVVRKRVDVLIEIQSQHDELEAKFLEEKSALE) form a coiled coil. The Nuclear export signal motif lies at 36 to 51 (LAPVVRKRVDVLIEIQ). Residues 279–301 (EDYGASWVDDEEDDDDEYSDEEA) are disordered. At Ser297 the chain carries Phosphoserine; by CK2.

It belongs to the nucleosome assembly protein (NAP) family.

Its subcellular location is the nucleus. It localises to the cytoplasm. Its function is as follows. May modulate chromatin structure by regulation of nucleosome assembly/disassembly. In Oryza sativa subsp. indica (Rice), this protein is Nucleosome assembly protein 1;3 (NAP1;3).